A 490-amino-acid polypeptide reads, in one-letter code: Hydroxysteroid dehydrogenase-like protein 2 (490 aa).

NADP(+) is bound by residues 17–23 (GASRGIG), K42, and D74. K42 carries the post-translational modification N6-(2-hydroxyisobutyryl)lysine. N6-acetyllysine is present on K116. Y168 acts as the Proton acceptor in catalysis. Residue K172 coordinates NADP(+). Over residues 282 to 301 (MEEKESNDSVPEVKEEKLQL) the composition is skewed to basic and acidic residues. The tract at residues 282–370 (MEEKESNDSV…PRQQPQPFVQ (89 aa)) is disordered. Low complexity predominate over residues 302–367 (QEESQLQKQP…QPRPRQQPQP (66 aa)). Residues 380–487 (GAVEETFRIV…KLEKLMTQMN (108 aa)) enclose the SCP2 domain. An N6-succinyllysine modification is found at K390.

This sequence belongs to the short-chain dehydrogenases/reductases (SDR) family. As to expression, widely expressed.

Its subcellular location is the peroxisome. It is found in the mitochondrion. Its function is as follows. Has apparently no steroid dehydrogenase activity. Controls bile acid (BA) and lipid metabolism in response to nutritional cues. This chain is Hydroxysteroid dehydrogenase-like protein 2 (Hsdl2), found in Mus musculus (Mouse).